The sequence spans 201 residues: dITP/XTP pyrophosphatase (201 aa).

8–13 contributes to the substrate binding site; sequence TTNENK. Residue Asp-68 is the Proton acceptor of the active site. Asp-68 is a Mg(2+) binding site. Residues Ser-69, 155-158, Lys-177, and 182-183 contribute to the substrate site; these read FGYD and HR.

The protein belongs to the HAM1 NTPase family. In terms of assembly, homodimer. Mg(2+) is required as a cofactor.

It carries out the reaction XTP + H2O = XMP + diphosphate + H(+). The enzyme catalyses dITP + H2O = dIMP + diphosphate + H(+). The catalysed reaction is ITP + H2O = IMP + diphosphate + H(+). Pyrophosphatase that catalyzes the hydrolysis of nucleoside triphosphates to their monophosphate derivatives, with a high preference for the non-canonical purine nucleotides XTP (xanthosine triphosphate), dITP (deoxyinosine triphosphate) and ITP. Seems to function as a house-cleaning enzyme that removes non-canonical purine nucleotides from the nucleotide pool, thus preventing their incorporation into DNA/RNA and avoiding chromosomal lesions. The chain is dITP/XTP pyrophosphatase from Borreliella burgdorferi (strain ATCC 35210 / DSM 4680 / CIP 102532 / B31) (Borrelia burgdorferi).